Reading from the N-terminus, the 1288-residue chain is MPNLQQTASQSQHHLHPHHLRPQQQQQQHHHHHQQQQQQQHTHHQQQQQHHSDFPLPDGWDIAKDFDGKTYYIDHINKKTTWLDPRDCYTKPQTFEDCVGDELPMGWEESYDPNIGPYYINHLAQSTQLEDPRQEWKTVQEQMLSDYLSAAQDQLENKREMFDVKQQRLLWAQEEYNHLKLAASRSSLCSSSSSMSRHDPELLRADLMLARERVHQLKQELTHITNDISYTERGMNTLYSVGEKINARENGCYDIAEVHAIREEMLKVHKSLVSGEKVREELMRSLVQIKNELGRQQISEENSDLASPFDRVCVASQTDLCGSSGENLNGGARFAEMAKTKWQYAEWRKHIKKLQQQLADHVERIEPGQLESDKDRILLIQEKEKLLNDLNSISLKSRSEEEKRVIHQTRHKLEEDLKEAYEANNTCVANRLRFHEEKQLLLDKLQEALKSTKLLEERLKSFSSESTFSISSGSSLGSLSTASSKSALSFTDIYIDPFAVDSPIDVVDLRRRSQRLFQQHQQQRLHPVHPVLQQQQSAEVTLSPRSSLSMETPPASPMKYNAGADQTPQALKEEPTYANALPAPPAYTAPPPVPISGVRARPYDLDSTVLDCMMLEAKLQKLNMGTPLNLAVAPLSPISEKPSLLDLPQEMLSRSSSTSNTRSVSAAVSNESVAGDSGVFEASRAHLPRKELAQVQIGLKYLKQEGVLVVSLERANNLLALWTASADNSQVYLRAALLPNSLTSIRTKALGDFQKPVFNDTFAVPITLDKLLTKSLQVTVVTMTGQKEEIIGTVQISMAEFNPEDSTLKWYNVLSSKFIPSFESLDIPSTSAAAAAAAVAASNAPNPGNNREESSDESTITSSQTSTLTRNQAPCMELQEQMAAELLGLGPLNEPECSDDDDDDEEEELDDKQLVSDVGLMNSSSMLHAYLQNMKQEFADKETNTDRAYLPEKSRGQSQLMDDRPVKRSQTFTPSEAFSKNRYNCRLNRSDSDSAMHCGVAPHTFQRGAAERRSLRFHSKAPKSVTKLHHTHIPRTSLDLELDLQAQHSKLYFLNDQIAKLQNLKEVLQKACENKDPLVAAWAIENEEFQRLVARADPAKCPEERQLQKLLMKTAKEIHKLRKTKVPKGCPDLVSFKEKITFFTRKGLSVPELPSEFTLPEANPIEEEEEEEDENEFYNSAETAIAINTALVASSNRNKNLSEHPHRATSGAVPKIPAPVVTPAATPAATPAATPAATSAATPAATPVVSPAAQPDAKPADAPIPVASNDAEQQRFDYVVDRNYGVEV.

A compositionally biased stretch (polar residues) spans 1 to 11 (MPNLQQTASQS). A disordered region spans residues 1–60 (MPNLQQTASQSQHHLHPHHLRPQQQQQQHHHHHQQQQQQQHTHHQQQQQHHSDFPLPDGW). Residues 35-49 (QQQQQQHTHHQQQQQ) are compositionally biased toward low complexity. 2 consecutive WW domains span residues 54-87 (FPLPDGWDIAKDFDGKTYYIDHINKKTTWLDPRD) and 101-134 (DELPMGWEESYDPNIGPYYINHLAQSTQLEDPRQ). 2 coiled-coil regions span residues 201–229 (ELLRADLMLARERVHQLKQELTHITNDIS) and 335–463 (AEMA…KSFS). Positions 541–550 (TLSPRSSLSM) are enriched in polar residues. Residues 541 to 560 (TLSPRSSLSMETPPASPMKY) are disordered. Residues 691-811 (ELAQVQIGLK…NPEDSTLKWY (121 aa)) form the C2 domain. Disordered regions lie at residues 841 to 869 (ASNAPNPGNNREESSDESTITSSQTSTLT), 890 to 912 (GPLNEPECSDDDDDDEEEELDDK), and 942 to 975 (ETNTDRAYLPEKSRGQSQLMDDRPVKRSQTFTPS). Positions 857–869 (ESTITSSQTSTLT) are enriched in low complexity. The segment covering 896 to 910 (ECSDDDDDDEEEELD) has biased composition (acidic residues). Over residues 942–966 (ETNTDRAYLPEKSRGQSQLMDDRPV) the composition is skewed to basic and acidic residues. Ser992 bears the Phosphoserine mark. Positions 1049–1076 (SKLYFLNDQIAKLQNLKEVLQKACENKD) form a coiled coil. A compositionally biased stretch (low complexity) spans 1224–1267 (AATPAATPAATPAATSAATPAATPVVSPAAQPDAKPADAPIPVA). The interval 1224 to 1269 (AATPAATPAATPAATSAATPAATPVVSPAAQPDAKPADAPIPVASN) is disordered.

Belongs to the WWC family. KIBRA subfamily. In terms of assembly, forms a complex with Mer and Ex. Interacts (via domain WW 1) with Ex (via RXPPXY motif). Interacts with Mer, Sav, Hpo and Wts. As to expression, expressed in ovarian posterior follicle cells and wing disks (at protein level).

Its subcellular location is the cytoplasm. It is found in the apical cell membrane. In terms of biological role, regulator of the Hippo/SWH (Sav/Wts/Hpo) signaling pathway, a signaling pathway that plays a pivotal role in organ size control and tumor suppression by restricting proliferation and promoting apoptosis. The core of this pathway is composed of a kinase cascade wherein Hippo (Hpo), in complex with its regulatory protein Salvador (Sav), phosphorylates and activates Warts (Wts) in complex with its regulatory protein Mats, which in turn phosphorylates and inactivates the Yorkie (Yki) oncoprotein. Kibra acts synergistically along with Ex and Mer to regulate the Hippo signaling pathway. In Drosophila melanogaster (Fruit fly), this protein is Protein kibra (kibra).